Consider the following 380-residue polypeptide: MAKRDYYEVLGVERGSSEADLKKAYRRLAMKHHPDRNPDDKASEELFKEANEAYEVLSDASKRAAYDQYGHAGVDPSMGGGGGFGGGAGGANFSDIFGDVFSDFFGGGRAGGGGGRGGAQRGSDLRYTLELNLEEAVRGTNVNIRVPTLVNCKPCDGSGAKKGSSPVTCPTCGGIGQVRMQQGFFSVQQTCPRCHGHGKIISDPCDSCHGEGRVEESKTLSVKVPPGVDTGDRIRLSGEGEAGTQGGPTGDLYVVINVREHAIFQRDGKHLFCEVPISFTDAALGGELEVPTLDGRVKLKIPEGTQTGKQFRLRGKGVAPVRGGGAGDLMCRVAVETPVNLSKRQRELLEEFRTSLENDESHSPKASGWFEGVKRFFGDL.

A J domain is found at 5-70; the sequence is DYYEVLGVER…SKRAAYDQYG (66 aa). A CR-type zinc finger spans residues 139–217; it reads GTNVNIRVPT…CHGEGRVEES (79 aa). Positions 152, 155, 169, 172, 191, 194, 205, and 208 each coordinate Zn(2+). 4 CXXCXGXG motif repeats span residues 152-159, 169-176, 191-198, and 205-212; these read CKPCDGSG, CPTCGGIG, CPRCHGHG, and CDSCHGEG. Residues 224–245 form a disordered region; it reads VPPGVDTGDRIRLSGEGEAGTQ.

The protein belongs to the DnaJ family. Homodimer. Requires Zn(2+) as cofactor.

The protein localises to the cytoplasm. Functionally, participates actively in the response to hyperosmotic and heat shock by preventing the aggregation of stress-denatured proteins and by disaggregating proteins, also in an autonomous, DnaK-independent fashion. Unfolded proteins bind initially to DnaJ; upon interaction with the DnaJ-bound protein, DnaK hydrolyzes its bound ATP, resulting in the formation of a stable complex. GrpE releases ADP from DnaK; ATP binding to DnaK triggers the release of the substrate protein, thus completing the reaction cycle. Several rounds of ATP-dependent interactions between DnaJ, DnaK and GrpE are required for fully efficient folding. Also involved, together with DnaK and GrpE, in the DNA replication of plasmids through activation of initiation proteins. The chain is Chaperone protein DnaJ from Pseudomonas syringae pv. syringae (strain B728a).